Consider the following 95-residue polypeptide: Large ribosomal subunit protein bL27 (95 aa).

Positions 1-6 (MFLQLF) are excised as a propeptide.

The protein belongs to the bacterial ribosomal protein bL27 family. Post-translationally, the N-terminus is cleaved by ribosomal processing cysteine protease Prp.

This is Large ribosomal subunit protein bL27 from Symbiobacterium thermophilum (strain DSM 24528 / JCM 14929 / IAM 14863 / T).